Reading from the N-terminus, the 345-residue chain is Short-wave-sensitive opsin 1 (345 aa).

At 1–30 (MSEEEFYLFKNISSVGPWDGPQYHIAPVWA) the chain is on the extracellular side. Asn11 carries N-linked (GlcNAc...) asparagine glycosylation. A helical transmembrane segment spans residues 31–55 (FYLQAAFMGTVFLIGFPLNAMVLVA). The Cytoplasmic portion of the chain corresponds to 56–67 (TLRYKKLRQPLN). A helical membrane pass occupies residues 68 to 93 (YILVNVSFGGFLLCIFSVFPVFVASC). At 94–107 (NGYFVFGRHVCALE) the chain is on the extracellular side. Cys104 and Cys181 are oxidised to a cystine. Residues 108–127 (GFLGTVAGLVTGWSLAFLAF) traverse the membrane as a helical segment. Residues 128–146 (ERYIVICKPFGNFRFSSKH) lie on the Cytoplasmic side of the membrane. A helical transmembrane segment spans residues 147–170 (ALTVVLATWTIGIGVSIPPFFGWS). Residues 171–196 (RFIPEGLQCSCGPDWYTVGTKYRSES) lie on the Extracellular side of the membrane. Residues 197 to 224 (YTWFLFIFCFIVPLSLICFSYTQLLRAL) traverse the membrane as a helical segment. Residues 225–246 (KAVAAQQQESATTQKAEREVSR) are Cytoplasmic-facing. Residues 247-270 (MVVVMVGSFCVCYVPYAAFAMYMV) traverse the membrane as a helical segment. Residues 271 to 278 (NNRNHGLD) are Extracellular-facing. A helical membrane pass occupies residues 279 to 303 (LRLVTIPSFFSKSACIYNPIIYCFM). N6-(retinylidene)lysine is present on Lys290. Over 304–345 (NKQFQACIMKMVCGKAMTDESDTCSSQKTEVSTVSSTQVGPN) the chain is Cytoplasmic.

It belongs to the G-protein coupled receptor 1 family. Opsin subfamily. In terms of processing, phosphorylated on some or all of the serine and threonine residues present in the C-terminal region. The three color pigments are found in the cone photoreceptor cells. Expressed throughout the epidermis and dermis, primarily in the stratum granulosum in the facial and abdominal skin (at protein level). Expressed in dermal fibroblasts (at protein level). Expressed in melanocytes (at protein level).

It is found in the cell membrane. The protein resides in the photoreceptor inner segment. It localises to the cell projection. The protein localises to the cilium. Its subcellular location is the photoreceptor outer segment. It is found in the cytoplasm. The protein resides in the perinuclear region. Functionally, visual pigments are the light-absorbing molecules that mediate vision. They consist of an apoprotein, opsin, covalently linked to cis-retinal. Required for the maintenance of cone outer segment organization in the ventral retina, but not essential for the maintenance of functioning cone photoreceptors. Involved in ensuring correct abundance and localization of retinal membrane proteins. May increase spectral sensitivity in dim light. In Homo sapiens (Human), this protein is Short-wave-sensitive opsin 1 (OPN1SW).